The following is a 70-amino-acid chain: Prokaryotic ubiquitin-like protein UBact (70 aa).

2 stretches are compositionally biased toward basic and acidic residues: residues 1-15 and 24-50; these read MPDQ…RKQG and TRHD…RDPG. Residues 1–70 form a disordered region; the sequence is MPDQRQQERS…RQQRREQSGE (70 aa). Residue Glu-70 forms an Isoglutamyl lysine isopeptide (Glu-Lys) (interchain with K-? in acceptor proteins) linkage.

It belongs to the ubiquitin-like protein UBact family.

Its function is as follows. May function as a protein modifier covalently attached to lysine residues of substrate proteins. This may serve to target the modified proteins for degradation by proteasomes. The protein is Prokaryotic ubiquitin-like protein UBact of Terrybacteria sp. (strain RIFCSPHIGHO2_01_FULL_58_15).